Consider the following 118-residue polypeptide: NADH-ubiquinone oxidoreductase chain 3 (118 aa).

2 helical membrane-spanning segments follow: residues 4 to 24 and 87 to 107; these read FAPICIYLVISLLVSLIPLGV and IDPFGSWSMMAFLLILTIGSL.

The protein belongs to the complex I subunit 3 family.

It is found in the mitochondrion membrane. The catalysed reaction is a ubiquinone + NADH + 5 H(+)(in) = a ubiquinol + NAD(+) + 4 H(+)(out). Its function is as follows. Core subunit of the mitochondrial membrane respiratory chain NADH dehydrogenase (Complex I) that is believed to belong to the minimal assembly required for catalysis. Complex I functions in the transfer of electrons from NADH to the respiratory chain. The immediate electron acceptor for the enzyme is believed to be ubiquinone. This is NADH-ubiquinone oxidoreductase chain 3 (ND3) from Panax ginseng (Korean ginseng).